The following is a 281-amino-acid chain: Microtubule-associated protein RP/EB family member 3 (281 aa).

A Calponin-homology (CH) domain is found at 14–116 (NLSRHDMLAW…FIQWFKKFFD (103 aa)). Disordered regions lie at residues 157-181 (VPQR…VAPP) and 260-281 (EGFA…QDEY). The segment covering 158-175 (PQRTSPTGPKNMQTSGRL) has biased composition (polar residues). Residues serine 162 and serine 176 each carry the phosphoserine modification. One can recognise an EB1 C-terminal domain in the interval 194–264 (GGHEADAQIL…LYATEEGFAP (71 aa)). Residues 217–260 (DGLEKERDFYFSKLRDIELICQEHESENSPVISGIIGILYATEE) form an APC-binding region. Positions 217-281 (DGLEKERDFY…EHQQEDQDEY (65 aa)) are DCTN1-binding. Residues 272 to 281 (EHQQEDQDEY) show a composition bias toward basic and acidic residues.

This sequence belongs to the MAPRE family. As to quaternary structure, homodimer. Heterodimer with MAPRE1. Binds monomeric and polymerized GTP-bound tubulin. Interacts with DCTN1 and SRCIN1. Binds to the C-terminal domain of APC. Interacts (via C-terminus) with CLIP1. Interacts with SLAIN2. Interacts with SLAIN1. Interacts with APC2. Interacts with AKAP9. Interacts with PDE4DIP isoform 2/MMG8/SMYLE; this interaction is required for its recruitment to the Golgi apparatus.

Its subcellular location is the cytoplasm. The protein resides in the cytoskeleton. Functionally, plus-end tracking protein (+TIP) that binds to the plus-end of microtubules and regulates the dynamics of the microtubule cytoskeleton. Promotes microtubule growth. May be involved in spindle function by stabilizing microtubules and anchoring them at centrosomes. Also acts as a regulator of minus-end microtubule organization: interacts with the complex formed by AKAP9 and PDE4DIP, leading to recruit CAMSAP2 to the Golgi apparatus, thereby tethering non-centrosomal minus-end microtubules to the Golgi, an important step for polarized cell movement. Promotes elongation of CAMSAP2-decorated microtubule stretches on the minus-end of microtubules. This is Microtubule-associated protein RP/EB family member 3 (Mapre3) from Mus musculus (Mouse).